Consider the following 284-residue polypeptide: Nucleotide-binding protein CPS_4546 (284 aa).

Residue 8–15 (GRSGSGKS) participates in ATP binding. 56-59 (DVRN) is a GTP binding site.

Belongs to the RapZ-like family.

Displays ATPase and GTPase activities. The sequence is that of Nucleotide-binding protein CPS_4546 from Colwellia psychrerythraea (strain 34H / ATCC BAA-681) (Vibrio psychroerythus).